We begin with the raw amino-acid sequence, 197 residues long: Phosphoheptose isomerase (197 aa).

In terms of domain architecture, SIS spans 36 to 197; the sequence is MVQCLVSEGK…IDQQLFGSTE (162 aa). 51–53 contributes to the substrate binding site; sequence NGG. Zn(2+)-binding residues include His60 and Glu64. Residues Glu64, 93 to 94, 119 to 121, Ser124, and Gln174 contribute to the substrate site; these read ND and STS. 2 residues coordinate Zn(2+): Gln174 and His182.

Belongs to the SIS family. GmhA subfamily. In terms of assembly, homotetramer. Zn(2+) serves as cofactor.

The protein resides in the cytoplasm. The catalysed reaction is 2 D-sedoheptulose 7-phosphate = D-glycero-alpha-D-manno-heptose 7-phosphate + D-glycero-beta-D-manno-heptose 7-phosphate. It functions in the pathway carbohydrate biosynthesis; D-glycero-D-manno-heptose 7-phosphate biosynthesis; D-glycero-alpha-D-manno-heptose 7-phosphate and D-glycero-beta-D-manno-heptose 7-phosphate from sedoheptulose 7-phosphate: step 1/1. In terms of biological role, catalyzes the isomerization of sedoheptulose 7-phosphate in D-glycero-D-manno-heptose 7-phosphate. The sequence is that of Phosphoheptose isomerase from Chromohalobacter salexigens (strain ATCC BAA-138 / DSM 3043 / CIP 106854 / NCIMB 13768 / 1H11).